The sequence spans 320 residues: Mitochondrial thiamine pyrophosphate carrier (320 aa).

3 Solcar repeats span residues 13-106 (NTKL…LTEL), 116-202 (REFS…LKHL), and 214-309 (NENL…FCNV). The chain crosses the membrane as a helical span at residues 19 to 39 (AVAGSVSGLVTRALISPFDVI). A Phosphoserine modification is found at Ser51. 4 helical membrane passes run 87–107 (ILSIGYGAVQFLSFEMLTELV), 122–142 (FVCGGLAACTATLTVHPVDVL), 173–193 (VFYKGLAPTLIAIFPYAGLQF), and 220–240 (LLCGSGAGVISKTLTYPLDLF). Residues 241 to 246 (KKRLQV) carry the Substrate recognition motif. Residues 293–313 (ALSTGFMFFWYEFFCNVFHCM) form a helical membrane-spanning segment.

It belongs to the mitochondrial carrier (TC 2.A.29) family.

The protein localises to the mitochondrion membrane. It catalyses the reaction thiamine phosphate(out) + thiamine diphosphate(in) = thiamine phosphate(in) + thiamine diphosphate(out). Its function is as follows. Mitochondrial transporter mediating uptake of thiamine diphosphate into mitochondria. It is not clear if the antiporter activity is affected by the membrane potential or by the proton electrochemical gradient. The sequence is that of Mitochondrial thiamine pyrophosphate carrier (SLC25A19) from Macaca fascicularis (Crab-eating macaque).